A 495-amino-acid polypeptide reads, in one-letter code: Putative aldehyde dehydrogenase AldA (495 aa).

212–218 (GKGSESG) provides a ligand contact to NAD(+). Active-site residues include E256 and C290.

The protein belongs to the aldehyde dehydrogenase family.

It carries out the reaction an aldehyde + NAD(+) + H2O = a carboxylate + NADH + 2 H(+). The protein is Putative aldehyde dehydrogenase AldA (aldA) of Staphylococcus aureus (strain USA300).